The following is a 279-amino-acid chain: Succinate dehydrogenase [ubiquinone] iron-sulfur subunit 1, mitochondrial (279 aa).

The N-terminal 28 residues, 1 to 28 (MASGLIGRLVGTKPSKLATAARLIPARW), are a transit peptide targeting the mitochondrion. The region spanning 52 to 141 (FQIYRWNPDN…ETTITPLPHM (90 aa)) is the 2Fe-2S ferredoxin-type domain. Residues Cys102, Cys107, and Cys122 each contribute to the [2Fe-2S] cluster site. Residues 184-214 (DRAKLDGMYECILCACCSTSCPSYWWNPESY) enclose the 4Fe-4S ferredoxin-type domain. [4Fe-4S] cluster-binding residues include Cys194, Cys197, and Cys200. Position 204 (Cys204) interacts with [3Fe-4S] cluster. Trp209 is a binding site for a ubiquinone. Positions 251 and 257 each coordinate [3Fe-4S] cluster. Cys261 provides a ligand contact to [4Fe-4S] cluster.

The protein belongs to the succinate dehydrogenase/fumarate reductase iron-sulfur protein family. In terms of assembly, component of complex II composed of eight subunits in plants: four classical SDH subunits SDH1, SDH2, SDH3 and SDH4 (a flavoprotein (FP), an iron-sulfur protein (IP), and a cytochrome b composed of a large and a small subunit.), as well as four subunits unknown in mitochondria from bacteria and heterotrophic eukaryotes. [2Fe-2S] cluster is required as a cofactor. It depends on [3Fe-4S] cluster as a cofactor. Requires [4Fe-4S] cluster as cofactor. As to expression, ubiquitous. Preferentially expressed in flowers and inflorescences.

The protein localises to the mitochondrion inner membrane. The enzyme catalyses a quinone + succinate = fumarate + a quinol. Its pathway is carbohydrate metabolism; tricarboxylic acid cycle; fumarate from succinate (eukaryal route): step 1/1. In terms of biological role, iron-sulfur protein (IP) subunit of succinate dehydrogenase (SDH) that is involved in complex II of the mitochondrial electron transport chain and is responsible for transferring electrons from succinate to ubiquinone (coenzyme Q). In Arabidopsis thaliana (Mouse-ear cress), this protein is Succinate dehydrogenase [ubiquinone] iron-sulfur subunit 1, mitochondrial (SDH2-1).